Reading from the N-terminus, the 102-residue chain is Protamine-2 (102 aa).

Phosphoserine is present on residues Ser8, Ser10, and Ser37. The disordered stretch occupies residues 16-102 (VYGQQLRGQE…RTRRRRCRRH (87 aa)). Residues 49–102 (GHSHYRRRHCSRRRLHRIHRQQHRSCGRRRRRSCRQRRRHRRGCRTRRRRCRRH) show a composition bias toward basic residues.

It belongs to the protamine P2 family. Interacts with TDRP. Post-translationally, proteolytic processing into mature chains is required for histone eviction during spermatogenesis. Transition proteins (TNP1 and TNP2) are required for processing. In terms of tissue distribution, testis.

Its subcellular location is the nucleus. The protein resides in the chromosome. Its function is as follows. Protamines substitute for histones in the chromatin of sperm during the haploid phase of spermatogenesis. They compact sperm DNA into a highly condensed, stable and inactive complex. This Hylobates lar (Lar gibbon) protein is Protamine-2 (PRM2).